A 1195-amino-acid chain; its full sequence is DNA-directed RNA polymerase subunit Rpo2 (1195 aa).

The segment covering 894–909 has biased composition (basic and acidic residues); it reads LEEGEERLGPQRRRES. Residues 894 to 914 form a disordered region; it reads LEEGEERLGPQRRRESSVTMR. The Zn(2+) site is built by C1135, C1140, C1155, and C1158.

Belongs to the RNA polymerase beta chain family. As to quaternary structure, part of the RNA polymerase complex. The cofactor is Zn(2+).

It localises to the cytoplasm. It carries out the reaction RNA(n) + a ribonucleoside 5'-triphosphate = RNA(n+1) + diphosphate. In terms of biological role, DNA-dependent RNA polymerase (RNAP) catalyzes the transcription of DNA into RNA using the four ribonucleoside triphosphates as substrates. This subunit is involved in DNA promoter recognition. This Thermoplasma acidophilum (strain ATCC 25905 / DSM 1728 / JCM 9062 / NBRC 15155 / AMRC-C165) protein is DNA-directed RNA polymerase subunit Rpo2.